A 441-amino-acid polypeptide reads, in one-letter code: MKVHVVGAGLSGSEIAYQLAIRGLKVILHEMRPSKMTPVHKTSYFAELVCSNSLKSDSIKNASGLLKRELELFGSLILRVARNCAVPAGKALAVDREEFSKQVTHVIRESGIDIVIEELRYIPDSKEDIWIIATGPATSDSFASWLREKVGHNMYFFDAVSPIITADSIDYSVVFRADRYGIGNQDYLNCPMNEYEYDRFYEALINAEVLPVKDFEKDLLFERCKPIEDIAKSGKRSLLFGPMKPTGIIDPRTGKQPFAVVQLRKENLDETLYNIVGFQTRLKWGEQRKIIRLIPGLEKAEIVRYGVMHKNIYINSRKVLDPFMRLKNDRKIFFAGQITGVEGYLESVASGLYVALNVYRISKNQEPLELPKSTMTGCLLNYILKGTDTTLQPMYANYGLMGPANKNREEVAKTALRDLENFLNYSQWKEGGIRENTVKGF.

7–12 (GAGLSG) serves as a coordination point for FAD.

Belongs to the MnmG family. TrmFO subfamily. Requires FAD as cofactor.

It localises to the cytoplasm. It catalyses the reaction uridine(54) in tRNA + (6R)-5,10-methylene-5,6,7,8-tetrahydrofolate + NADH + H(+) = 5-methyluridine(54) in tRNA + (6S)-5,6,7,8-tetrahydrofolate + NAD(+). The catalysed reaction is uridine(54) in tRNA + (6R)-5,10-methylene-5,6,7,8-tetrahydrofolate + NADPH + H(+) = 5-methyluridine(54) in tRNA + (6S)-5,6,7,8-tetrahydrofolate + NADP(+). Functionally, catalyzes the folate-dependent formation of 5-methyl-uridine at position 54 (M-5-U54) in all tRNAs. The sequence is that of Methylenetetrahydrofolate--tRNA-(uracil-5-)-methyltransferase TrmFO from Pseudothermotoga lettingae (strain ATCC BAA-301 / DSM 14385 / NBRC 107922 / TMO) (Thermotoga lettingae).